A 94-amino-acid chain; its full sequence is Integration host factor subunit beta (94 aa).

It belongs to the bacterial histone-like protein family. As to quaternary structure, heterodimer of an alpha and a beta chain.

Its function is as follows. This protein is one of the two subunits of integration host factor, a specific DNA-binding protein that functions in genetic recombination as well as in transcriptional and translational control. This is Integration host factor subunit beta from Vibrio atlanticus (strain LGP32) (Vibrio splendidus (strain Mel32)).